Reading from the N-terminus, the 167-residue chain is NADH-quinone oxidoreductase subunit B 2 (167 aa).

The [4Fe-4S] cluster site is built by C39, C40, C104, and C134.

Belongs to the complex I 20 kDa subunit family. As to quaternary structure, NDH-1 is composed of 14 different subunits. Subunits NuoB, C, D, E, F, and G constitute the peripheral sector of the complex. It depends on [4Fe-4S] cluster as a cofactor.

It localises to the cell inner membrane. It catalyses the reaction a quinone + NADH + 5 H(+)(in) = a quinol + NAD(+) + 4 H(+)(out). In terms of biological role, NDH-1 shuttles electrons from NADH, via FMN and iron-sulfur (Fe-S) centers, to quinones in the respiratory chain. Couples the redox reaction to proton translocation (for every two electrons transferred, four hydrogen ions are translocated across the cytoplasmic membrane), and thus conserves the redox energy in a proton gradient. This Burkholderia mallei (strain NCTC 10247) protein is NADH-quinone oxidoreductase subunit B 2.